The primary structure comprises 343 residues: Phosphate acyltransferase (343 aa).

This sequence belongs to the PlsX family. As to quaternary structure, homodimer. Probably interacts with PlsY.

The protein resides in the cytoplasm. The enzyme catalyses a fatty acyl-[ACP] + phosphate = an acyl phosphate + holo-[ACP]. The protein operates within lipid metabolism; phospholipid metabolism. Functionally, catalyzes the reversible formation of acyl-phosphate (acyl-PO(4)) from acyl-[acyl-carrier-protein] (acyl-ACP). This enzyme utilizes acyl-ACP as fatty acyl donor, but not acyl-CoA. In Coxiella burnetii (strain CbuG_Q212) (Coxiella burnetii (strain Q212)), this protein is Phosphate acyltransferase.